Here is a 330-residue protein sequence, read N- to C-terminus: Aspartate--ammonia ligase (330 aa).

Belongs to the class-II aminoacyl-tRNA synthetase family. AsnA subfamily.

It is found in the cytoplasm. The enzyme catalyses L-aspartate + NH4(+) + ATP = L-asparagine + AMP + diphosphate + H(+). The protein operates within amino-acid biosynthesis; L-asparagine biosynthesis; L-asparagine from L-aspartate (ammonia route): step 1/1. In Streptococcus pneumoniae serotype 2 (strain D39 / NCTC 7466), this protein is Aspartate--ammonia ligase.